The sequence spans 139 residues: Nucleoside diphosphate kinase (139 aa).

ATP contacts are provided by K10, F58, R86, T92, R104, and N114. H117 functions as the Pros-phosphohistidine intermediate in the catalytic mechanism.

Belongs to the NDK family. As to quaternary structure, homotetramer. It depends on Mg(2+) as a cofactor.

The protein localises to the cytoplasm. The enzyme catalyses a 2'-deoxyribonucleoside 5'-diphosphate + ATP = a 2'-deoxyribonucleoside 5'-triphosphate + ADP. It carries out the reaction a ribonucleoside 5'-diphosphate + ATP = a ribonucleoside 5'-triphosphate + ADP. Functionally, major role in the synthesis of nucleoside triphosphates other than ATP. The ATP gamma phosphate is transferred to the NDP beta phosphate via a ping-pong mechanism, using a phosphorylated active-site intermediate. The polypeptide is Nucleoside diphosphate kinase (Rhodococcus erythropolis (strain PR4 / NBRC 100887)).